We begin with the raw amino-acid sequence, 346 residues long: L-malyl-CoA/beta-methylmalyl-CoA lyase (346 aa).

The Mg(2+) site is built by Glu-148 and Asp-177. Residues 176–177 and 253–254 contribute to the substrate site; these read VD and LH.

It belongs to the HpcH/HpaI aldolase family. The cofactor is Mg(2+). Mn(2+) is required as a cofactor.

The catalysed reaction is (S)-malyl-CoA = glyoxylate + acetyl-CoA. It catalyses the reaction (2R,3S)-beta-methylmalyl-CoA = propanoyl-CoA + glyoxylate. Functionally, involved in the methylaspartate cycle. Catalyzes the reversible cleavage of beta-methylmalyl-CoA to propionyl-CoA and glyoxylate, as well as the reversible cleavage of (S)-malyl-CoA to acetyl-CoA and glyoxylate. In addition, it has a small malyl-CoA thioesterase activity. It can also catalyze the cleavage of (S)-citramalyl-CoA to acetyl-CoA and pyruvate. This is L-malyl-CoA/beta-methylmalyl-CoA lyase (citE1) from Haloarcula marismortui (strain ATCC 43049 / DSM 3752 / JCM 8966 / VKM B-1809) (Halobacterium marismortui).